Reading from the N-terminus, the 762-residue chain is PHD finger protein 20-like protein 1 (762 aa).

Tudor domains are found at residues 11–71 (ITFE…LERP) and 85–141 (VDFK…EDAK). 5 disordered regions span residues 178–231 (AKNK…TSSD), 289–359 (AEKK…CIKP), 383–411 (SVIN…RSQR), 536–559 (SLKL…EGTE), and 613–651 (LSGK…QHDY). The span at 193-211 (NKDKEERKWLKVPSKKEET) shows a compositional bias: basic and acidic residues. 2 stretches are compositionally biased toward polar residues: residues 319-340 (DISS…SSGK) and 383-398 (SVIN…NSPR). Residues 399 to 410 (SYKHSQRRRRSQ) are compositionally biased toward basic residues. Basic and acidic residues predominate over residues 614–632 (SGKKKEKEKEKKEKKEKDH). A compositionally biased stretch (basic residues) spans 633 to 647 (KSKQKKKKKKKKKSK).

It is found in the nucleus. Its function is as follows. Is a negative regulator of proteasomal degradation of methylated proteins. Involved in the maintainance of pluripotency of embryonic stem cells. The polypeptide is PHD finger protein 20-like protein 1 (PHF20L1) (Gallus gallus (Chicken)).